Reading from the N-terminus, the 322-residue chain is tRNA uridine(34) hydroxylase (322 aa).

The 95-residue stretch at leucine 126 to glutamate 220 folds into the Rhodanese domain. Residue cysteine 180 is the Cysteine persulfide intermediate of the active site.

The protein belongs to the TrhO family.

It carries out the reaction uridine(34) in tRNA + AH2 + O2 = 5-hydroxyuridine(34) in tRNA + A + H2O. In terms of biological role, catalyzes oxygen-dependent 5-hydroxyuridine (ho5U) modification at position 34 in tRNAs. This chain is tRNA uridine(34) hydroxylase, found in Shouchella clausii (strain KSM-K16) (Alkalihalobacillus clausii).